The chain runs to 311 residues: Vomeronasal type-1 receptor 105 (311 aa).

The Extracellular segment spans residues 1 to 17 (MMNKNSRLYTDSNIRNT). The chain crosses the membrane as a helical span at residues 18-38 (FFAEIGIGVSANSLLLLFNIF). Topologically, residues 39–50 (KLICGQRSRLTD) are cytoplasmic. The chain crosses the membrane as a helical span at residues 51 to 71 (LPIGLLSLINLLMLLMTAFIA). Over 72 to 94 (TDTFISWRGWDDIICKSLLYLYR) the chain is Extracellular. A disulfide bridge links Cys86 with Cys173. Residues 95 to 115 (TFRGLSLCTSCLLSVLQAIIL) traverse the membrane as a helical segment. Over 116–135 (SPRSSCLAKFKHKPSHHISC) the chain is Cytoplasmic. Residues 136 to 156 (AILSLSVLYMFISSHLLVSII) form a helical membrane-spanning segment. Topologically, residues 157–188 (ATPNLTTNDFIHVTQWCSILPMSYLMQSMFST) are extracellular. The N-linked (GlcNAc...) asparagine glycan is linked to Asn160. The chain crosses the membrane as a helical span at residues 189–209 (LLAIRDVFLISLMVLSTWYMV). Residues 210–239 (ALLCRHRKQTRHLQGTSLSPKASPEQRATR) lie on the Cytoplasmic side of the membrane. The helical transmembrane segment at 240–260 (SILMLMSLFVLMSVFDSIVCS) threads the bilayer. The Extracellular segment spans residues 261–271 (SRTMYLNDPIS). The chain crosses the membrane as a helical span at residues 272 to 292 (YSYQLFMVHIYATVSPFVFIV). Topologically, residues 293–311 (TEKHIVNSLRSMCVKVMNV) are cytoplasmic.

Belongs to the G-protein coupled receptor 1 family. As to expression, expressed in 1-4% of neurons of the vomeronasal organ. Only one pheromone receptor gene may be expressed in a particular neuron. Not expressed in the main olfactory epithelium.

The protein resides in the cell membrane. Its function is as follows. Putative pheromone receptor implicated in the regulation of social as well as reproductive behavior. The protein is Vomeronasal type-1 receptor 105 (Vom1r105) of Rattus norvegicus (Rat).